Reading from the N-terminus, the 477-residue chain is MTPLPVVLAHALPELILAGGVLLLILIGAIRGKDSDGPMTELAVGLLGIAILTLVLGTKTQAVLFDGSFIDDAFGRFMKVLVLIGSLVSLIMGQTYLAREKIDKFEFPILILLSTLGMLMLISATGLIALYLGLELMSLALYVIAAFHRDDVKASEAGLKYFVLGALSSGMLLYGASLIYGFAGTVNFTGIATALHGETSLGVVFGLVFLTAGLAFKMSTVPFHMWTPDVYEGAPTPVTAFFASAPKLAAIAITMRIMITAFAGIKPQWQQIIVFISILSMALGSFAAIGQTNIKRLMAYSSIGHMGFALVGLAAGTETGIQGVLAYMAIYLVMTLGTFAAILSMRVNGVNVEQISDLAGLARTRGSMAFFLAIMMFSLAGIPPLAGFFAKWYVFNAAIQAHLYPLAVIGVLCSTVGAYYYLRIVKVMYFDDPAPAFDRPTPTLAAVLIVTGLAVLLLCVYPGSFVEATTVAARSLF.

A run of 13 helical transmembrane segments spans residues 7-27 (VLAHALPELILAGGVLLLILI), 37-57 (GPMTELAVGLLGIAILTLVLG), 77-97 (FMKVLVLIGSLVSLIMGQTYL), 109-129 (ILILLSTLGMLMLISATGLIA), 162-182 (FVLGALSSGMLLYGASLIYGF), 201-221 (LGVVFGLVFLTAGLAFKMSTV), 233-253 (GAPTPVTAFFASAPKLAAIAI), 272-292 (IIVFISILSMALGSFAAIGQT), 297-317 (LMAYSSIGHMGFALVGLAAGT), 323-343 (GVLAYMAIYLVMTLGTFAAIL), 369-389 (AFFLAIMMFSLAGIPPLAGFF), 402-424 (HLYPLAVIGVLCSTVGAYYYLRI), and 446-466 (AVLIVTGLAVLLLCVYPGSFV).

It belongs to the complex I subunit 2 family. As to quaternary structure, NDH-1 is composed of 14 different subunits. Subunits NuoA, H, J, K, L, M, N constitute the membrane sector of the complex.

Its subcellular location is the cell inner membrane. The enzyme catalyses a quinone + NADH + 5 H(+)(in) = a quinol + NAD(+) + 4 H(+)(out). NDH-1 shuttles electrons from NADH, via FMN and iron-sulfur (Fe-S) centers, to quinones in the respiratory chain. The immediate electron acceptor for the enzyme in this species is believed to be ubiquinone. Couples the redox reaction to proton translocation (for every two electrons transferred, four hydrogen ions are translocated across the cytoplasmic membrane), and thus conserves the redox energy in a proton gradient. This is NADH-quinone oxidoreductase subunit N from Beijerinckia indica subsp. indica (strain ATCC 9039 / DSM 1715 / NCIMB 8712).